Here is a 265-residue protein sequence, read N- to C-terminus: tRNA pseudouridine synthase A (265 aa).

Residue Asp52 is the Nucleophile of the active site. Residue Tyr105 coordinates substrate.

This sequence belongs to the tRNA pseudouridine synthase TruA family.

The catalysed reaction is uridine(38/39/40) in tRNA = pseudouridine(38/39/40) in tRNA. Functionally, formation of pseudouridine at positions 38, 39 and 40 in the anticodon stem and loop of transfer RNAs. This Archaeoglobus fulgidus (strain ATCC 49558 / DSM 4304 / JCM 9628 / NBRC 100126 / VC-16) protein is tRNA pseudouridine synthase A.